The following is a 355-amino-acid chain: MGEEEKKPEAAEEKKMEEKKPEEKKEGEDKKVDAEKKGEDSDKKPQEGESNKDSKEDSAPAAPEAPAPPPPPQEVVLKVYMHCEGCARKVRRCLKGFEGVEDVMTDCKTGKVVVKGEKADPLKVLARVQRKTHRQVQLLSPIPPPPPPPEKKAEEDKPIVEEKKVEPPVVVTVVLKVHMHCEACATEIKKRIMRMKGVESAESDLKSSQVTVKGVFEPQKLVEYVYKRTGKHAAIMKIDPPPPPPPEEAAAAAEGEKKEEEKGEGESKGEEGKDDKAKTDEEKKEGDGGKGEGEAADNGGGEEEGKVVEVRKIENPYYYYYYQPPRVAIPPMEMPPHAYPPQLFSDENPNACTVM.

The span at 1 to 58 (MGEEEKKPEAAEEKKMEEKKPEEKKEGEDKKVDAEKKGEDSDKKPQEGESNKDSKEDS) shows a compositional bias: basic and acidic residues. Positions 1–74 (MGEEEKKPEA…APAPPPPPQE (74 aa)) are disordered. The span at 63 to 73 (PEAPAPPPPPQ) shows a compositional bias: pro residues. HMA domains are found at residues 72–136 (PQEV…HRQV) and 170–234 (VVTV…KHAA). A metal cation-binding residues include Cys-83 and Cys-86. Residues 132–157 (THRQVQLLSPIPPPPPPPEKKAEEDK) are disordered. Residues Cys-181 and Cys-184 each coordinate a metal cation. The disordered stretch occupies residues 235–308 (IMKIDPPPPP…GGGEEEGKVV (74 aa)). Positions 254-293 (EGEKKEEEKGEGESKGEEGKDDKAKTDEEKKEGDGGKGEG) are enriched in basic and acidic residues. At Cys-352 the chain carries Cysteine methyl ester. A lipid anchor (S-farnesyl cysteine) is attached at Cys-352. Positions 353 to 355 (TVM) are cleaved as a propeptide — removed in mature form.

The protein belongs to the HIPP family. Efficiently farnesylated in vitro.

Heavy-metal-binding protein. Binds zinc, copper and nickel in a reversible manner. This Arabidopsis thaliana (Mouse-ear cress) protein is Heavy metal-associated isoprenylated plant protein 7.